We begin with the raw amino-acid sequence, 147 residues long: Ubiquitin-conjugating enzyme E2 D4 (147 aa).

The 147-residue stretch at M1–M147 folds into the UBC core domain. C85 acts as the Glycyl thioester intermediate in catalysis.

This sequence belongs to the ubiquitin-conjugating enzyme family.

The catalysed reaction is S-ubiquitinyl-[E1 ubiquitin-activating enzyme]-L-cysteine + [E2 ubiquitin-conjugating enzyme]-L-cysteine = [E1 ubiquitin-activating enzyme]-L-cysteine + S-ubiquitinyl-[E2 ubiquitin-conjugating enzyme]-L-cysteine.. Its pathway is protein modification; protein ubiquitination. Accepts ubiquitin from the E1 complex and catalyzes its covalent attachment to other proteins. In vitro able to promote polyubiquitination using all 7 ubiquitin Lys residues, but may prefer 'Lys-11' and 'Lys-48'-linked polyubiquitination. This is Ubiquitin-conjugating enzyme E2 D4 (UBE2D4) from Homo sapiens (Human).